Consider the following 196-residue polypeptide: Homeobox protein ANF-1 (196 aa).

Residues 119-178 (GRRPRTAFTRNQIEVLENVFKMNSYPGIDIREELARKLDLEEDRIQIWFQNRRAKLKRSH) constitute a DNA-binding region (homeobox).

The protein belongs to the ANF homeobox family.

The protein localises to the nucleus. Functionally, may be involved in the early patterning of the most anterior region of the main embryonic body axis. The polypeptide is Homeobox protein ANF-1 (Gallus gallus (Chicken)).